A 971-amino-acid polypeptide reads, in one-letter code: Isoleucine--tRNA ligase (971 aa).

Residues 64–74 (PYANGHIHIGH) carry the 'HIGH' region motif. Position 602 (Glu602) interacts with L-isoleucyl-5'-AMP. Positions 643–647 (KMSKS) match the 'KMSKS' region motif. Lys646 is a binding site for ATP.

It belongs to the class-I aminoacyl-tRNA synthetase family. IleS type 1 subfamily. Monomer.

The protein localises to the cytoplasm. The catalysed reaction is tRNA(Ile) + L-isoleucine + ATP = L-isoleucyl-tRNA(Ile) + AMP + diphosphate. Functionally, catalyzes the attachment of isoleucine to tRNA(Ile). As IleRS can inadvertently accommodate and process structurally similar amino acids such as valine, to avoid such errors it has two additional distinct tRNA(Ile)-dependent editing activities. One activity is designated as 'pretransfer' editing and involves the hydrolysis of activated Val-AMP. The other activity is designated 'posttransfer' editing and involves deacylation of mischarged Val-tRNA(Ile). The polypeptide is Isoleucine--tRNA ligase (Bartonella henselae (strain ATCC 49882 / DSM 28221 / CCUG 30454 / Houston 1) (Rochalimaea henselae)).